Here is a 610-residue protein sequence, read N- to C-terminus: Elongation factor 4 (610 aa).

In terms of domain architecture, tr-type G spans 11–193 (EKIRNFSIIA…QIVEKVPAPT (183 aa)). Residues 23 to 28 (DHGKST) and 140 to 143 (NKID) contribute to the GTP site.

It belongs to the TRAFAC class translation factor GTPase superfamily. Classic translation factor GTPase family. LepA subfamily.

The protein localises to the cell membrane. The catalysed reaction is GTP + H2O = GDP + phosphate + H(+). Its function is as follows. Required for accurate and efficient protein synthesis under certain stress conditions. May act as a fidelity factor of the translation reaction, by catalyzing a one-codon backward translocation of tRNAs on improperly translocated ribosomes. Back-translocation proceeds from a post-translocation (POST) complex to a pre-translocation (PRE) complex, thus giving elongation factor G a second chance to translocate the tRNAs correctly. Binds to ribosomes in a GTP-dependent manner. The sequence is that of Elongation factor 4 from Streptococcus pyogenes serotype M2 (strain MGAS10270).